Here is a 221-residue protein sequence, read N- to C-terminus: Imidazoleglycerol-phosphate dehydratase (221 aa).

The protein belongs to the imidazoleglycerol-phosphate dehydratase family.

The enzyme catalyses D-erythro-1-(imidazol-4-yl)glycerol 3-phosphate = 3-(imidazol-4-yl)-2-oxopropyl phosphate + H2O. It participates in amino-acid biosynthesis; L-histidine biosynthesis; L-histidine from 5-phospho-alpha-D-ribose 1-diphosphate: step 6/9. In Kluyveromyces marxianus (Yeast), this protein is Imidazoleglycerol-phosphate dehydratase (HIS3).